The following is a 541-amino-acid chain: 2-succinyl-5-enolpyruvyl-6-hydroxy-3-cyclohexene-1-carboxylate synthase (541 aa).

Belongs to the TPP enzyme family. MenD subfamily. Homodimer. Mg(2+) is required as a cofactor. The cofactor is Mn(2+). It depends on thiamine diphosphate as a cofactor.

The catalysed reaction is isochorismate + 2-oxoglutarate + H(+) = 5-enolpyruvoyl-6-hydroxy-2-succinyl-cyclohex-3-ene-1-carboxylate + CO2. It participates in quinol/quinone metabolism; 1,4-dihydroxy-2-naphthoate biosynthesis; 1,4-dihydroxy-2-naphthoate from chorismate: step 2/7. Its pathway is quinol/quinone metabolism; menaquinone biosynthesis. Functionally, catalyzes the thiamine diphosphate-dependent decarboxylation of 2-oxoglutarate and the subsequent addition of the resulting succinic semialdehyde-thiamine pyrophosphate anion to isochorismate to yield 2-succinyl-5-enolpyruvyl-6-hydroxy-3-cyclohexene-1-carboxylate (SEPHCHC). In Rhodococcus opacus (strain B4), this protein is 2-succinyl-5-enolpyruvyl-6-hydroxy-3-cyclohexene-1-carboxylate synthase.